The sequence spans 753 residues: 5-methyltetrahydropteroyltriglutamate--homocysteine methyltransferase (753 aa).

5-methyltetrahydropteroyltri-L-glutamate is bound by residues 17–20 and K117; that span reads RELK. L-homocysteine-binding positions include 431–433 and E484; that span reads IGS. Residues 431-433 and E484 contribute to the L-methionine site; that span reads IGS. 5-methyltetrahydropteroyltri-L-glutamate is bound by residues 515–516 and W561; that span reads RC. D599 is an L-homocysteine binding site. D599 is a binding site for L-methionine. E605 provides a ligand contact to 5-methyltetrahydropteroyltri-L-glutamate. Zn(2+)-binding residues include H641, C643, and E665. H694 functions as the Proton donor in the catalytic mechanism. Zn(2+) is bound at residue C726.

It belongs to the vitamin-B12 independent methionine synthase family. The cofactor is Zn(2+).

The catalysed reaction is 5-methyltetrahydropteroyltri-L-glutamate + L-homocysteine = tetrahydropteroyltri-L-glutamate + L-methionine. The protein operates within amino-acid biosynthesis; L-methionine biosynthesis via de novo pathway; L-methionine from L-homocysteine (MetE route): step 1/1. Its function is as follows. Catalyzes the transfer of a methyl group from 5-methyltetrahydrofolate to homocysteine resulting in methionine formation. In Shigella boydii serotype 18 (strain CDC 3083-94 / BS512), this protein is 5-methyltetrahydropteroyltriglutamate--homocysteine methyltransferase.